A 146-amino-acid chain; its full sequence is Hemoglobin subunit beta (146 aa).

Valine 1 is modified (N-acetylvaline). The Globin domain occupies 2–146 (HLTAEEKSAV…VANALAHKYH (145 aa)). Serine 44 carries the phosphoserine modification. Lysine 59 is subject to N6-acetyllysine. Histidine 63 contacts heme b. At lysine 82 the chain carries N6-acetyllysine. Histidine 92 is a binding site for heme b. An S-nitrosocysteine modification is found at cysteine 93. Residue lysine 144 is modified to N6-acetyllysine.

The protein belongs to the globin family. As to quaternary structure, heterotetramer of two alpha chains and two beta chains. Red blood cells.

In terms of biological role, involved in oxygen transport from the lung to the various peripheral tissues. The chain is Hemoglobin subunit beta from Tamias merriami (Merriam's chipmunk).